A 347-amino-acid polypeptide reads, in one-letter code: Violet-sensitive opsin (347 aa).

Residues Met1–Ala31 are Extracellular-facing. Asn12 carries an N-linked (GlcNAc...) asparagine glycan. The helical transmembrane segment at Phe32–Val56 threads the bilayer. Residues Thr57–Asn68 are Cytoplasmic-facing. The helical transmembrane segment at Tyr69–Ser94 threads the bilayer. The Extracellular portion of the chain corresponds to Gln95–Asp108. Cysteines 105 and 182 form a disulfide. Residues Ala109–Phe128 traverse the membrane as a helical segment. The Cytoplasmic portion of the chain corresponds to Glu129–His147. Residues Ala148–Ser171 traverse the membrane as a helical segment. Residues Arg172 to Tyr197 lie on the Extracellular side of the membrane. Residues Tyr198–Leu225 traverse the membrane as a helical segment. Residues Arg226–Arg247 lie on the Cytoplasmic side of the membrane. The helical transmembrane segment at Met248–Val271 threads the bilayer. Residues Thr272–Asp279 are Extracellular-facing. A helical membrane pass occupies residues Leu280–Met304. Position 291 is an N6-(retinylidene)lysine (Lys291). The Cytoplasmic segment spans residues Asn305–Ala347. The interval Asp323 to Ala347 is disordered.

It belongs to the G-protein coupled receptor 1 family. Opsin subfamily. Post-translationally, phosphorylated on some or all of the serine and threonine residues present in the C-terminal region. In terms of tissue distribution, the color pigments are found in the cone photoreceptor cells.

Its subcellular location is the membrane. Visual pigments are the light-absorbing molecules that mediate vision. They consist of an apoprotein, opsin, covalently linked to cis-retinal. The sequence is that of Violet-sensitive opsin from Xenopus laevis (African clawed frog).